We begin with the raw amino-acid sequence, 359 residues long: Histidinol-phosphate aminotransferase (359 aa).

Position 217 is an N6-(pyridoxal phosphate)lysine (K217).

This sequence belongs to the class-II pyridoxal-phosphate-dependent aminotransferase family. Histidinol-phosphate aminotransferase subfamily. Homodimer. Pyridoxal 5'-phosphate serves as cofactor.

It carries out the reaction L-histidinol phosphate + 2-oxoglutarate = 3-(imidazol-4-yl)-2-oxopropyl phosphate + L-glutamate. It participates in amino-acid biosynthesis; L-histidine biosynthesis; L-histidine from 5-phospho-alpha-D-ribose 1-diphosphate: step 7/9. This is Histidinol-phosphate aminotransferase from Citrobacter koseri (strain ATCC BAA-895 / CDC 4225-83 / SGSC4696).